Reading from the N-terminus, the 1024-residue chain is Carbamoyl phosphate synthase large chain (1024 aa).

The interval Met1 to Glu402 is carboxyphosphate synthetic domain. Residues Arg129, Arg169, Gly175, Gly176, Glu208, Ile210, Glu215, Gly241, Val242, His243, Gln285, and Glu299 each contribute to the ATP site. Residues Gln133–Val328 form the ATP-grasp 1 domain. Residues Gln285, Glu299, and Asn301 each contribute to the Mg(2+) site. Positions 285, 299, and 301 each coordinate Mn(2+). Residues Gly403 to Val546 are oligomerization domain. A carbamoyl phosphate synthetic domain region spans residues Ala547–Lys929. An ATP-grasp 2 domain is found at Asn671–Ala863. The ATP site is built by Arg707, Gln747, Leu749, Glu754, Gly779, Val780, His781, Ser782, Gln822, and Glu834. Mg(2+)-binding residues include Gln822, Glu834, and Asn836. Gln822, Glu834, and Asn836 together coordinate Mn(2+). The 95-residue stretch at Asn930–Lys1024 folds into the MGS-like domain. An allosteric domain region spans residues Asn930 to Lys1024.

Belongs to the CarB family. In terms of assembly, composed of two chains; the small (or glutamine) chain promotes the hydrolysis of glutamine to ammonia, which is used by the large (or ammonia) chain to synthesize carbamoyl phosphate. Tetramer of heterodimers (alpha,beta)4. Mg(2+) is required as a cofactor. Mn(2+) serves as cofactor.

It catalyses the reaction hydrogencarbonate + L-glutamine + 2 ATP + H2O = carbamoyl phosphate + L-glutamate + 2 ADP + phosphate + 2 H(+). The catalysed reaction is hydrogencarbonate + NH4(+) + 2 ATP = carbamoyl phosphate + 2 ADP + phosphate + 2 H(+). It functions in the pathway amino-acid biosynthesis; L-arginine biosynthesis; carbamoyl phosphate from bicarbonate: step 1/1. Its pathway is pyrimidine metabolism; UMP biosynthesis via de novo pathway; (S)-dihydroorotate from bicarbonate: step 1/3. Large subunit of the glutamine-dependent carbamoyl phosphate synthetase (CPSase). CPSase catalyzes the formation of carbamoyl phosphate from the ammonia moiety of glutamine, carbonate, and phosphate donated by ATP, constituting the first step of 2 biosynthetic pathways, one leading to arginine and/or urea and the other to pyrimidine nucleotides. The large subunit (synthetase) binds the substrates ammonia (free or transferred from glutamine from the small subunit), hydrogencarbonate and ATP and carries out an ATP-coupled ligase reaction, activating hydrogencarbonate by forming carboxy phosphate which reacts with ammonia to form carbamoyl phosphate. This chain is Carbamoyl phosphate synthase large chain, found in Deinococcus radiodurans (strain ATCC 13939 / DSM 20539 / JCM 16871 / CCUG 27074 / LMG 4051 / NBRC 15346 / NCIMB 9279 / VKM B-1422 / R1).